Consider the following 469-residue polypeptide: Mitochondrial adenyl nucleotide antiporter SLC25A25 (469 aa).

The regulatory N-terminal domain stretch occupies residues 1 to 165; it reads MLCLCLYVPI…LYWKHSTIFD (165 aa). The Mitochondrial intermembrane segment spans residues 1–189; the sequence is MLCLCLYVPI…ERQTGMWWRH (189 aa). EF-hand domains follow at residues 47-80, 78-113, and 114-149; these read TYRQWKQKIVQAGDKDLDGQLDFEEFVHYLQDHE, DHEKKLRLVFKSLDKKNDGRIDAQEIMQSLRDLGVK, and ISEQQAEKILKSMDKNGTMTIDWNEWRDYHLLHPVE. The Ca(2+) site is built by aspartate 60, aspartate 62, aspartate 64, glutamine 66, and glutamate 71. A linker region region spans residues 151 to 160; the sequence is IPEIILYWKH. The C-terminal transmembrane transporter domain stretch occupies residues 166 to 469; the sequence is VGENLTVPDE…LKITLGVQSR (304 aa). Solcar repeat units follow at residues 184–270, 278–363, and 375–463; these read GMWW…MKRL, LRIH…LKNT, and PGVF…LKIT. The chain crosses the membrane as a helical span at residues 190–207; sequence LVAGGGAGAVSRTCTAPL. Residues 208–244 are Mitochondrial matrix-facing; sequence DRLKVLMQVHASRSNNMCIIGGFTQMIREGGAKSLWR. A helical membrane pass occupies residues 245 to 264; it reads GNGINVLKIAPESAIKFMAY. The Mitochondrial intermembrane segment spans residues 265-287; that stretch reads EQMKRLVGSDQETLRIHERLVAG. A helical transmembrane segment spans residues 288–301; it reads SLAGAIAQSSIYPM. Over 302–337 the chain is Mitochondrial matrix; it reads EVLKTRMALRKTGQYSGMLDCAKRILAKEGVAAFYK. Residues 338-357 traverse the membrane as a helical segment; the sequence is GYIPNMLGIIPYAGIDLAVY. The Mitochondrial intermembrane segment spans residues 358-380; that stretch reads ETLKNTWLQRYAVNSADPGVFVL. The chain crosses the membrane as a helical span at residues 381–398; the sequence is LACGTISSTCGQLASYPL. The Mitochondrial matrix portion of the chain corresponds to 399 to 437; the sequence is ALVRTRMQAQASIEGAPEVTMSSLFKQILRTEGAFGLYR. A helical transmembrane segment spans residues 438-457; it reads GLAPNFMKVIPAVSISYVVY. Topologically, residues 458–469 are mitochondrial intermembrane; sequence ENLKITLGVQSR.

Belongs to the mitochondrial carrier (TC 2.A.29) family. In terms of tissue distribution, mainly present in the liver and the skeletal muscle (at protein level).

Its subcellular location is the mitochondrion inner membrane. The catalysed reaction is Mg(2+)(out) + phosphate(in) + ATP(out) = Mg(2+)(in) + phosphate(out) + ATP(in). Its activity is regulated as follows. Activated by an increase in cytosolic calcium levels that induce a conformational change of the N-terminal regulatory domain, uncapping the channel and allowing transport. In terms of biological role, electroneutral antiporter that most probably mediates the transport of adenyl nucleotides through the inner mitochondrial membrane. Originally identified as an ATP-magnesium/inorganic phosphate antiporter, it could have a broader specificity for adenyl nucleotides. By regulating the mitochondrial matrix adenyl nucleotide pool could adapt to changing cellular energetic demands and indirectly regulate adenyl nucleotide-dependent metabolic pathways. This Rattus norvegicus (Rat) protein is Mitochondrial adenyl nucleotide antiporter SLC25A25.